The following is a 145-amino-acid chain: Large ribosomal subunit protein uL11 (145 aa).

Belongs to the universal ribosomal protein uL11 family. As to quaternary structure, part of the ribosomal stalk of the 50S ribosomal subunit. Interacts with L10 and the large rRNA to form the base of the stalk. L10 forms an elongated spine to which L12 dimers bind in a sequential fashion forming a multimeric L10(L12)X complex. Post-translationally, one or more lysine residues are methylated.

Its function is as follows. Forms part of the ribosomal stalk which helps the ribosome interact with GTP-bound translation factors. This Coxiella burnetii (strain CbuK_Q154) (Coxiella burnetii (strain Q154)) protein is Large ribosomal subunit protein uL11.